The sequence spans 409 residues: MRVFVARQPIFNRKEQVVAYELLYRESEENVYSAKDGDQATTDLVINSFLNIGIEKLTEGKRCFVNFTESLMFSNLPTSFNPKQLVIEILEDIPITPALISRCKELKKMGYMLALDDFYAINPQDEDLLEKLMSYIDILKIDFLKTTRMERRTILQTYGCRGLIFLAEKVETRKEYKQAVQDGFQLFQGYFFSEPRIISGHDLSTHFYSYYELLNELSKEQPNIKRVTEYIERDLSLSYQILKFLNSSHSRLSQKIESIQQAIMLLGFNEIKRWIYILSFKDLSRKGHSSKHEIIKISLIRAKLCELLARKTSRPQPASYMLIGMFSLIDTLLHREIEEIVQELPLKDEVGQALLGHQNDYYQMLELVKLIESNNWDTCSELGNQLDKEEAYECYLEALEWCHNLMDAK.

An EAL domain is found at 1 to 209; it reads MRVFVARQPI…GHDLSTHFYS (209 aa). The HDOD domain occupies 203 to 392; sequence LSTHFYSYYE…GNQLDKEEAY (190 aa).

This is an uncharacterized protein from Bacillus subtilis (strain 168).